We begin with the raw amino-acid sequence, 82 residues long: Large ribosomal subunit protein uL23 (82 aa).

It belongs to the universal ribosomal protein uL23 family. In terms of assembly, part of the 50S ribosomal subunit. Contacts protein L29.

Binds to 23S rRNA. One of the proteins that surrounds the polypeptide exit tunnel on the outside of the ribosome. The sequence is that of Large ribosomal subunit protein uL23 from Natronomonas pharaonis (strain ATCC 35678 / DSM 2160 / CIP 103997 / JCM 8858 / NBRC 14720 / NCIMB 2260 / Gabara) (Halobacterium pharaonis).